The primary structure comprises 1291 residues: Vacuolating cytotoxin autotransporter (1291 aa).

Residues 1–33 (MEIQQTHRKINRPLVSLALVGALVSITPQQSHA) form the signal peptide. The disordered stretch occupies residues 326–374 (PPEGGYKDKPNDKPSNTTQNNAKNDKQESSQNNSNTQVINPPNSAQKTE). Polar residues-rich tracts occupy residues 338-347 (KPSNTTQNNA) and 354-374 (SSQNNSNTQVINPPNSAQKTE). Residues 1018-1291 (KYEKPTNVWA…ASNLGMRYSF (274 aa)) enclose the Autotransporter domain.

It is found in the periplasm. Its subcellular location is the secreted. The protein resides in the cell surface. It localises to the cell outer membrane. Induces vacuolation of eukaryotic cells. Causes ulceration and gastric lesions. This is Vacuolating cytotoxin autotransporter (vacA) from Helicobacter pylori (Campylobacter pylori).